Here is a 612-residue protein sequence, read N- to C-terminus: MDLPGNSSPFTQPSLCRQPLSRASWEARSPKRPRLQPLGTPSSLEKASRRVLAVVLEDVMTTNRVPLTHKEDTPSPLTHNHHQDPVCTQSPALPSQQVKWSMQARPPDPLHLCREPLTRARQSSPALRMRSRAASGPEESPSKKTDQVPQPTLVVVLEDIASGRQPAEGFDEDQPNLIVPAQSTFRSLKGPGKHCHRRGLDLEARPTLTLSLHPRAEPVTKAGQPMPTPSDLEPPFQLSTLPADPPESPVPDPALETPVIPTSSSLLRPRLSPWGLAPLFRSVRSKLESFADIFFTPNKTPQPPPPSPPMKLELKIAISEAEQSRATEKITSVSPRPPIRQWRTQCNSLAPVSKSSLGRSYSCPDLGPPDPGSWPPVPSQPSQSRPRRHTVGCGEMARTPPPPRPCLRKEVFPLGGVGVSPSLTTSCSANAPASFFCEPAEPRLGSTKGKELRASKDKVFSDPETKTMGKVSRFRIRRTPVRLQPNLTPMGLPRPIRLNKKEFTLEEIYTNKNYQSPTTRRTFETIFEEPRERNGTLIFTSSRKLRRAVEFRDSSLPRSRRPSRGVRTAASRTLTPNLAPSQDVGSLLQERLRELDALLLEEETDKEHPCHL.

Met-1 bears the N-acetylmethionine mark. 2 stretches are compositionally biased toward polar residues: residues 1 to 15 (MDLP…QPSL) and 86 to 96 (VCTQSPALPSQ). Disordered stretches follow at residues 1-48 (MDLP…EKAS), 65-96 (VPLT…LPSQ), 119-150 (RARQ…QVPQ), and 206-256 (PTLT…PALE). Residues 1–135 (MDLPGNSSPF…ALRMRSRAAS (135 aa)) form a sufficient for heterochromatin association in interphase and chromatin association in anaphase region. The segment at 85–405 (PVCTQSPALP…MARTPPPPRP (321 aa)) is required for the interaction with GRB2 and sufficient to promote the phosphorylation of AKT and cell proliferation. The tract at residues 136 to 392 (GPEESPSKKT…QSRPRRHTVG (257 aa)) is required for nuclear lamina association. Residues 243-252 (ADPPESPVPD) are compositionally biased toward pro residues. Position 307 is a phosphoserine (Ser-307). Disordered stretches follow at residues 323–405 (QSRA…PPRP), 444–463 (LGST…FSDP), and 553–583 (DSSL…PSQD). Positions 342 to 359 (WRTQCNSLAPVSKSSLGR) are enriched in polar residues. Residues 366-379 (LGPPDPGSWPPVPS) show a composition bias toward pro residues. Basic and acidic residues predominate over residues 448–463 (KGKELRASKDKVFSDP). The segment at 546–563 (RRAVEFRDSSLPRSRRPS) is required for nuclear localization. Polar residues predominate over residues 570 to 583 (ASRTLTPNLAPSQD).

Interacts (via proline-rich region) with GRB2 (via SH3 domain 2). Interacts (via N-terminus) with CBX5.

The protein resides in the chromosome. Its subcellular location is the nucleus. It localises to the nucleus lamina. The protein localises to the nucleoplasm. Its function is as follows. Functions in tethering peripheral heterochromatin to the nuclear lamina during interphase, possibly through the interaction with heterochromatin protein CBX5/HP1 alpha. Might play a role in reattaching heterochromatin to the nuclear lamina at mitotic exit. Promotes myoblast differentiation during skeletal myogenesis, possibly by stimulating transcription factor MyoD activity via binding to CBX5/HP1 alpha. Involved in the positive regulation of the PI3K-Akt-mTOR signaling pathway and in promoting cell proliferation, possibly via binding to GRB2. This Mus musculus (Mouse) protein is Proline-rich protein 14 (Prr14).